Reading from the N-terminus, the 378-residue chain is Transaldolase 1 (378 aa).

Residue K146 is the Schiff-base intermediate with substrate of the active site.

It belongs to the transaldolase family. Type 2 subfamily.

It localises to the cytoplasm. The catalysed reaction is D-sedoheptulose 7-phosphate + D-glyceraldehyde 3-phosphate = D-erythrose 4-phosphate + beta-D-fructose 6-phosphate. It functions in the pathway carbohydrate degradation; pentose phosphate pathway; D-glyceraldehyde 3-phosphate and beta-D-fructose 6-phosphate from D-ribose 5-phosphate and D-xylulose 5-phosphate (non-oxidative stage): step 2/3. Transaldolase is important for the balance of metabolites in the pentose-phosphate pathway. This chain is Transaldolase 1, found in Streptomyces avermitilis (strain ATCC 31267 / DSM 46492 / JCM 5070 / NBRC 14893 / NCIMB 12804 / NRRL 8165 / MA-4680).